Consider the following 168-residue polypeptide: Ribosome maturation factor RimM (168 aa).

Positions Glu-96–Phe-168 constitute a PRC barrel domain.

It belongs to the RimM family. As to quaternary structure, binds ribosomal protein uS19.

Its subcellular location is the cytoplasm. In terms of biological role, an accessory protein needed during the final step in the assembly of 30S ribosomal subunit, possibly for assembly of the head region. Essential for efficient processing of 16S rRNA. May be needed both before and after RbfA during the maturation of 16S rRNA. It has affinity for free ribosomal 30S subunits but not for 70S ribosomes. This Coxiella burnetii (strain Dugway 5J108-111) protein is Ribosome maturation factor RimM.